A 282-amino-acid chain; its full sequence is D-alanine aminotransferase (282 aa).

Tyr-32 lines the substrate pocket. Pyridoxal 5'-phosphate is bound at residue Arg-51. Substrate is bound by residues Arg-99 and His-101. The Proton acceptor role is filled by Lys-146. Residue Lys-146 is modified to N6-(pyridoxal phosphate)lysine. Position 178 (Glu-178) interacts with pyridoxal 5'-phosphate.

The protein belongs to the class-IV pyridoxal-phosphate-dependent aminotransferase family. As to quaternary structure, homodimer. The cofactor is pyridoxal 5'-phosphate.

The catalysed reaction is D-alanine + 2-oxoglutarate = D-glutamate + pyruvate. Its function is as follows. Acts on the D-isomers of alanine, leucine, aspartate, glutamate, aminobutyrate, norvaline and asparagine. The enzyme transfers an amino group from a substrate D-amino acid to the pyridoxal phosphate cofactor to form pyridoxamine and an alpha-keto acid in the first half-reaction. The second half-reaction is the reverse of the first, transferring the amino group from the pyridoxamine to a second alpha-keto acid to form the product D-amino acid via a ping-pong mechanism. This is an important process in the formation of D-alanine and D-glutamate, which are essential bacterial cell wall components. This is D-alanine aminotransferase (dat) from Staphylococcus epidermidis (strain ATCC 35984 / DSM 28319 / BCRC 17069 / CCUG 31568 / BM 3577 / RP62A).